Reading from the N-terminus, the 1912-residue chain is Methylcytosine dioxygenase TET2 (1912 aa).

Over residues 1–11 (MEQDRTTHAEG) the composition is skewed to basic and acidic residues. The tract at residues 1 to 86 (MEQDRTTHAE…PHEDRGYSRC (86 aa)) is disordered. A phosphoserine mark is found at serine 15 and serine 23. Polar residues predominate over residues 53–74 (TKWQSSQSCYGISHMKGSQSSH). Serine 76 and serine 97 each carry phosphoserine. Disordered regions lie at residues 112–166 (LDQK…FPTR), 340–359 (DRNL…QKET), 367–388 (SSKF…QSLL), 429–470 (IDHQ…PEKS), 673–723 (PQTQ…DKQR), 832–862 (EQAQ…AEAA), 907–966 (QEQQ…NGQP), and 1009–1052 (ESEN…EGCN). 5 stretches are compositionally biased toward polar residues: residues 135–158 (SRQP…QESS), 340–353 (DRNL…SEQY), 367–387 (SSKF…SQSL), 434–447 (KTSS…SVHT), and 673–689 (PQTQ…SNFP). Positions 690–701 (QICQQQQQQQLQ) are enriched in low complexity. Composition is skewed to polar residues over residues 707–719 (QMPQ…QGSN) and 832–844 (EQAQ…SSLQ). A compositionally biased stretch (low complexity) spans 907-921 (QEQQQTQQSQPGHNQ). 2 stretches are compositionally biased toward polar residues: residues 944-966 (PQEN…NGQP) and 1036-1046 (SDTPGEQSQNG). Serine 1036 bears the Phosphoserine mark. Positions 1048, 1106, 1132, and 1134 each coordinate Zn(2+). Arginine 1174 is a binding site for 2-oxoglutarate. Residues cysteine 1184, cysteine 1186, cysteine 1202, and cysteine 1211 each coordinate Zn(2+). Positions 1203-1216 (SWSMYYNGCKFARS) are interaction with DNA. Residue lysine 1212 forms a Glycyl lysine isopeptide (Lys-Gly) (interchain with G-Cter in ubiquitin) linkage. Position 1271 (cysteine 1271) interacts with Zn(2+). Cysteine 1287 provides a ligand contact to 2-oxoglutarate. Histidine 1293 serves as a coordination point for Zn(2+). Fe cation contacts are provided by histidine 1295 and aspartate 1297. Asparagine 1300 contributes to the substrate binding site. Position 1329 (histidine 1329) interacts with 2-oxoglutarate. Disordered regions lie at residues 1379–1414 (KKKA…SSSH) and 1444–1514 (LQRH…HTSD). A compositionally biased stretch (basic residues) spans 1387–1396 (AKTKKAARKR). The span at 1456-1473 (QPQPPQPQPQTTPQPQPQ) shows a compositional bias: pro residues. A compositionally biased stretch (polar residues) spans 1480-1512 (GNSQSVGSHCSGSTSVYTRQPTPHSPYPSSAHT). Residue histidine 1795 participates in Fe cation binding. Residue 1810–1812 (RIS) participates in 2-oxoglutarate binding. 1816–1818 (YRH) provides a ligand contact to substrate. Histidine 1826 serves as a coordination point for Zn(2+). The span at 1842-1866 (EEECGKNGSDHVSQKNHGKQEKREP) shows a compositional bias: basic and acidic residues. Residues 1842-1871 (EEECGKNGSDHVSQKNHGKQEKREPTGPQE) are disordered.

This sequence belongs to the TET family. Interacts with HCFC1. Interacts with OGT. Interacts with PROSER1; this interaction mediates TET2 O-GlcNAcylation and stability by promoting the interaction between OGT and TET2. Directly interacts (via C-terminus) with the DCAF1 component of the CRL4(VprBP) E3 ubiquitin-protein ligase complex. Fe(2+) serves as cofactor. It depends on Zn(2+) as a cofactor. In terms of processing, may be glycosylated. It is unclear whether interaction with OGT leads to GlcNAcylation. According to a report, it is GlcNAcylated by OGT. In contrast, another group reports no GlcNAcylation by OGT in human ortholog. Post-translationally, monoubiquitinated at Lys-1212 by the DCX (DDB1-CUL4-X-box) E3 ubiquitin-protein ligase complex called CRL4(VprBP) or CUL4A-RBX1-DDB1-DCAF1/VPRBP complex; this modification promotes binding to DNA. Acetylated. Expressed in the brain, kidney, heart, lung, muscle and stomach. Expressed in germinal vesicle (GV) stage and MII-stage oocytes and in early embryos. Present in embryonic stem cells (ES cells).

The protein localises to the nucleus. It is found in the chromosome. The enzyme catalyses a 5-methyl-2'-deoxycytidine in DNA + 2-oxoglutarate + O2 = a 5-hydroxymethyl-2'-deoxycytidine in DNA + succinate + CO2. The catalysed reaction is a 5-hydroxymethyl-2'-deoxycytidine in DNA + 2-oxoglutarate + O2 = a 5-formyl-2'-deoxycytidine in DNA + succinate + CO2 + H2O. It carries out the reaction a 5-formyl-2'-deoxycytidine in DNA + 2-oxoglutarate + O2 = a 5-carboxyl-2'-deoxycytidine in DNA + succinate + CO2 + H(+). Its function is as follows. Dioxygenase that catalyzes the conversion of the modified genomic base 5-methylcytosine (5mC) into 5-hydroxymethylcytosine (5hmC) and plays a key role in active DNA demethylation. Has a preference for 5-hydroxymethylcytosine in CpG motifs. Also mediates subsequent conversion of 5hmC into 5-formylcytosine (5fC), and conversion of 5fC to 5-carboxylcytosine (5caC). Conversion of 5mC into 5hmC, 5fC and 5caC probably constitutes the first step in cytosine demethylation. Methylation at the C5 position of cytosine bases is an epigenetic modification of the mammalian genome which plays an important role in transcriptional regulation. In addition to its role in DNA demethylation, also involved in the recruitment of the O-GlcNAc transferase OGT to CpG-rich transcription start sites of active genes, thereby promoting histone H2B GlcNAcylation by OGT. The polypeptide is Methylcytosine dioxygenase TET2 (Tet2) (Mus musculus (Mouse)).